We begin with the raw amino-acid sequence, 548 residues long: Folylpolyglutamate synthase (548 aa).

130 to 133 (GKGS) provides a ligand contact to ATP. Mg(2+)-binding residues include serine 157, glutamate 234, and histidine 262. The ATP site is built by arginine 382 and aspartate 396.

The protein belongs to the folylpolyglutamate synthase family. Requires a monovalent cation as cofactor.

The protein localises to the mitochondrion inner membrane. Its subcellular location is the mitochondrion matrix. It localises to the cytoplasm. The enzyme catalyses (6S)-5,6,7,8-tetrahydrofolyl-(gamma-L-Glu)(n) + L-glutamate + ATP = (6S)-5,6,7,8-tetrahydrofolyl-(gamma-L-Glu)(n+1) + ADP + phosphate + H(+). It participates in cofactor biosynthesis; tetrahydrofolylpolyglutamate biosynthesis. Functionally, catalyzes conversion of folates to polyglutamate derivatives allowing concentration of folate compounds in the cell and the intracellular retention of these cofactors, which are important substrates for most of the folate-dependent enzymes that are involved in one-carbon transfer reactions involved in purine, pyrimidine and amino acid synthesis. Required for methionine synthesis and maintenance of intact mitochondrial DNA. Involved in telomere maintenance. This chain is Folylpolyglutamate synthase, found in Saccharomyces cerevisiae (strain RM11-1a) (Baker's yeast).